We begin with the raw amino-acid sequence, 621 residues long: F-box/LRR-repeat protein 4 (621 aa).

Position 28 is an asymmetric dimethylarginine (Arg-28). In terms of domain architecture, F-box spans Asn-277 to Leu-332. LRR repeat units lie at residues Glu-376–Ser-397, Asn-402–His-421, Ser-427–Asn-448, Glu-452–Ile-474, Asn-480–Ala-501, Cys-504–Cys-524, Leu-532–Cys-558, Thr-559–Ser-583, and Cys-584–Ser-609.

Part of a SCF (SKP1-CUL1-F-box) protein ligase complex. Interacts with FAF2 and VCP. Interacts with PPTC7; this interaction promotes destruction of BNIP3 and NIX and mitophagy suppression.

Its subcellular location is the cytoplasm. It localises to the nucleus. It is found in the mitochondrion outer membrane. In terms of biological role, substrate-recognition component of the mitochondria-localized SCF-FBXL4 ubiquitin E3 ligase complex that plays a role in the restriction of mitophagy by controlling the degradation of BNIP3 and NIX mitophagy receptors. Also rescues mitochondrial injury through reverting hyperactivation of DRP1-mediated mitochondrial fission. The sequence is that of F-box/LRR-repeat protein 4 (Fbxl4) from Mus musculus (Mouse).